A 321-amino-acid chain; its full sequence is Porphobilinogen deaminase (321 aa).

Cys243 is subject to S-(dipyrrolylmethanemethyl)cysteine.

The protein belongs to the HMBS family. Monomer. Dipyrromethane is required as a cofactor.

It catalyses the reaction 4 porphobilinogen + H2O = hydroxymethylbilane + 4 NH4(+). Its pathway is porphyrin-containing compound metabolism; protoporphyrin-IX biosynthesis; coproporphyrinogen-III from 5-aminolevulinate: step 2/4. In terms of biological role, tetrapolymerization of the monopyrrole PBG into the hydroxymethylbilane pre-uroporphyrinogen in several discrete steps. The polypeptide is Porphobilinogen deaminase (Histophilus somni (strain 129Pt) (Haemophilus somnus)).